A 423-amino-acid polypeptide reads, in one-letter code: Type II methyltransferase M.BamHI (423 aa).

Basic and acidic residues predominate over residues 397-414 (DFRQDHEGNSKGDKKNEN). The segment at 397–423 (DFRQDHEGNSKGDKKNENNDQISLSLE) is disordered.

It belongs to the N(4)/N(6)-methyltransferase family.

The enzyme catalyses a 2'-deoxycytidine in DNA + S-adenosyl-L-methionine = an N(4)-methyl-2'-deoxycytidine in DNA + S-adenosyl-L-homocysteine + H(+). Functionally, a beta subtype methylase, recognizes the double-stranded sequence 5'-GGATCC-3', methylates C-5 on both strands, and protects the DNA from cleavage by the BamHI endonuclease. The polypeptide is Type II methyltransferase M.BamHI (Bacillus amyloliquefaciens (Bacillus velezensis)).